The following is a 130-amino-acid chain: Small ribosomal subunit protein uS9 (130 aa).

A disordered region spans residues 105 to 130 (TRDPRMKERKKYGLHKARKAPQYSKR). A compositionally biased stretch (basic residues) spans 111–130 (KERKKYGLHKARKAPQYSKR).

It belongs to the universal ribosomal protein uS9 family.

This chain is Small ribosomal subunit protein uS9, found in Syntrophomonas wolfei subsp. wolfei (strain DSM 2245B / Goettingen).